A 294-amino-acid polypeptide reads, in one-letter code: Bifunctional protein FolD (294 aa).

Residues 166–168 (GRS), S191, and I232 each bind NADP(+).

It belongs to the tetrahydrofolate dehydrogenase/cyclohydrolase family. In terms of assembly, homodimer.

It catalyses the reaction (6R)-5,10-methylene-5,6,7,8-tetrahydrofolate + NADP(+) = (6R)-5,10-methenyltetrahydrofolate + NADPH. The catalysed reaction is (6R)-5,10-methenyltetrahydrofolate + H2O = (6R)-10-formyltetrahydrofolate + H(+). The protein operates within one-carbon metabolism; tetrahydrofolate interconversion. Catalyzes the oxidation of 5,10-methylenetetrahydrofolate to 5,10-methenyltetrahydrofolate and then the hydrolysis of 5,10-methenyltetrahydrofolate to 10-formyltetrahydrofolate. This Bradyrhizobium sp. (strain BTAi1 / ATCC BAA-1182) protein is Bifunctional protein FolD.